We begin with the raw amino-acid sequence, 215 residues long: Probable nicotinate-nucleotide adenylyltransferase (215 aa).

Belongs to the NadD family.

It catalyses the reaction nicotinate beta-D-ribonucleotide + ATP + H(+) = deamido-NAD(+) + diphosphate. It participates in cofactor biosynthesis; NAD(+) biosynthesis; deamido-NAD(+) from nicotinate D-ribonucleotide: step 1/1. Functionally, catalyzes the reversible adenylation of nicotinate mononucleotide (NaMN) to nicotinic acid adenine dinucleotide (NaAD). The protein is Probable nicotinate-nucleotide adenylyltransferase of Coxiella burnetii (strain Dugway 5J108-111).